The primary structure comprises 647 residues: Macrolide export ATP-binding/permease protein MacB 2 (647 aa).

One can recognise an ABC transporter domain in the interval Ile6–Lys244. Gly42 to Ser49 provides a ligand contact to ATP. The tract at residues Gln223–Val247 is disordered. The span at Pro230 to Ala242 shows a compositional bias: low complexity. 4 helical membrane-spanning segments follow: residues Phe273–Gly293, Ile527–Val547, Leu581–Val601, and Leu610–Leu630.

Belongs to the ABC transporter superfamily. Macrolide exporter (TC 3.A.1.122) family. In terms of assembly, homodimer. Part of the tripartite efflux system MacAB-TolC, which is composed of an inner membrane transporter, MacB, a periplasmic membrane fusion protein, MacA, and an outer membrane component, TolC. The complex forms a large protein conduit and can translocate molecules across both the inner and outer membranes. Interacts with MacA.

The protein localises to the cell inner membrane. In terms of biological role, part of the tripartite efflux system MacAB-TolC. MacB is a non-canonical ABC transporter that contains transmembrane domains (TMD), which form a pore in the inner membrane, and an ATP-binding domain (NBD), which is responsible for energy generation. Confers resistance against macrolides. This is Macrolide export ATP-binding/permease protein MacB 2 from Aeromonas hydrophila subsp. hydrophila (strain ATCC 7966 / DSM 30187 / BCRC 13018 / CCUG 14551 / JCM 1027 / KCTC 2358 / NCIMB 9240 / NCTC 8049).